Consider the following 165-residue polypeptide: Phosphopantetheine adenylyltransferase (165 aa).

The protein belongs to the eukaryotic CoaD family.

The protein localises to the cytoplasm. It carries out the reaction (R)-4'-phosphopantetheine + ATP + H(+) = 3'-dephospho-CoA + diphosphate. Its pathway is cofactor biosynthesis; coenzyme A biosynthesis. Reversibly transfers an adenylyl group from ATP to 4'-phosphopantetheine, yielding dephospho-CoA (dPCoA) and pyrophosphate. This is Phosphopantetheine adenylyltransferase from Thermococcus kodakarensis (strain ATCC BAA-918 / JCM 12380 / KOD1) (Pyrococcus kodakaraensis (strain KOD1)).